The primary structure comprises 123 residues: MADITVELVSVERMLWSGKASIVTAQTVEGEIGVLPGHEPLLAQLVDNGVVTIRPVDGDKLVAAVQGGFLSISKEKVTILAEYAIWADEVNTAESESHLQADDEISKARAEAELKAVRRKAEA.

It belongs to the ATPase epsilon chain family. F-type ATPases have 2 components, CF(1) - the catalytic core - and CF(0) - the membrane proton channel. CF(1) has five subunits: alpha(3), beta(3), gamma(1), delta(1), epsilon(1). CF(0) has three main subunits: a, b and c.

It is found in the cell membrane. Functionally, produces ATP from ADP in the presence of a proton gradient across the membrane. In Corynebacterium diphtheriae (strain ATCC 700971 / NCTC 13129 / Biotype gravis), this protein is ATP synthase epsilon chain.